Reading from the N-terminus, the 398-residue chain is 4-hydroxy-3-methylbut-2-enyl diphosphate reductase (398 aa).

A [4Fe-4S] cluster-binding site is contributed by Cys66. A (2E)-4-hydroxy-3-methylbut-2-enyl diphosphate-binding site is contributed by His96. A dimethylallyl diphosphate-binding site is contributed by His96. An isopentenyl diphosphate-binding site is contributed by His96. Cys157 provides a ligand contact to [4Fe-4S] cluster. His185 lines the (2E)-4-hydroxy-3-methylbut-2-enyl diphosphate pocket. Residue His185 coordinates dimethylallyl diphosphate. His185 contributes to the isopentenyl diphosphate binding site. Glu187 serves as the catalytic Proton donor. Thr250 lines the (2E)-4-hydroxy-3-methylbut-2-enyl diphosphate pocket. Residue Cys288 coordinates [4Fe-4S] cluster. (2E)-4-hydroxy-3-methylbut-2-enyl diphosphate-binding residues include Ser317, Ser318, Asn319, and Ser380. Positions 317, 318, 319, and 380 each coordinate dimethylallyl diphosphate. Ser317, Ser318, Asn319, and Ser380 together coordinate isopentenyl diphosphate.

The protein belongs to the IspH family. Requires [4Fe-4S] cluster as cofactor.

It catalyses the reaction isopentenyl diphosphate + 2 oxidized [2Fe-2S]-[ferredoxin] + H2O = (2E)-4-hydroxy-3-methylbut-2-enyl diphosphate + 2 reduced [2Fe-2S]-[ferredoxin] + 2 H(+). The enzyme catalyses dimethylallyl diphosphate + 2 oxidized [2Fe-2S]-[ferredoxin] + H2O = (2E)-4-hydroxy-3-methylbut-2-enyl diphosphate + 2 reduced [2Fe-2S]-[ferredoxin] + 2 H(+). The protein operates within isoprenoid biosynthesis; dimethylallyl diphosphate biosynthesis; dimethylallyl diphosphate from (2E)-4-hydroxy-3-methylbutenyl diphosphate: step 1/1. Its pathway is isoprenoid biosynthesis; isopentenyl diphosphate biosynthesis via DXP pathway; isopentenyl diphosphate from 1-deoxy-D-xylulose 5-phosphate: step 6/6. Functionally, catalyzes the conversion of 1-hydroxy-2-methyl-2-(E)-butenyl 4-diphosphate (HMBPP) into a mixture of isopentenyl diphosphate (IPP) and dimethylallyl diphosphate (DMAPP). Acts in the terminal step of the DOXP/MEP pathway for isoprenoid precursor biosynthesis. This is 4-hydroxy-3-methylbut-2-enyl diphosphate reductase from Prochlorococcus marinus (strain AS9601).